Reading from the N-terminus, the 216-residue chain is Ribose-5-phosphate isomerase A (216 aa).

Residues 26-29 (TGST), 79-82 (DGAD), and 92-95 (KGGG) each bind substrate. The Proton acceptor role is filled by Glu101. Lys119 lines the substrate pocket.

The protein belongs to the ribose 5-phosphate isomerase family. In terms of assembly, homodimer.

It catalyses the reaction aldehydo-D-ribose 5-phosphate = D-ribulose 5-phosphate. The protein operates within carbohydrate degradation; pentose phosphate pathway; D-ribose 5-phosphate from D-ribulose 5-phosphate (non-oxidative stage): step 1/1. Catalyzes the reversible conversion of ribose-5-phosphate to ribulose 5-phosphate. This Legionella pneumophila subsp. pneumophila (strain Philadelphia 1 / ATCC 33152 / DSM 7513) protein is Ribose-5-phosphate isomerase A.